We begin with the raw amino-acid sequence, 166 residues long: Putative 4-hydroxy-4-methyl-2-oxoglutarate aldolase (166 aa).

Residues 74-77 (GDQI) and Arg-96 each bind substrate. Position 97 (Asp-97) interacts with a divalent metal cation.

This sequence belongs to the class II aldolase/RraA-like family. Homotrimer. A divalent metal cation serves as cofactor.

The enzyme catalyses 4-hydroxy-4-methyl-2-oxoglutarate = 2 pyruvate. It carries out the reaction oxaloacetate + H(+) = pyruvate + CO2. Catalyzes the aldol cleavage of 4-hydroxy-4-methyl-2-oxoglutarate (HMG) into 2 molecules of pyruvate. Also contains a secondary oxaloacetate (OAA) decarboxylase activity due to the common pyruvate enolate transition state formed following C-C bond cleavage in the retro-aldol and decarboxylation reactions. The polypeptide is Putative 4-hydroxy-4-methyl-2-oxoglutarate aldolase (Xanthomonas axonopodis pv. citri (strain 306)).